The sequence spans 215 residues: Glutathione S-transferase D4 (215 aa).

Residues 1–80 enclose the GST N-terminal domain; it reads MDFYYSPRSS…YLVEKYGKDD (80 aa). Glutathione-binding positions include S9, 50-52, and 64-66; these read HTI and ESR. Residues 86–207 form the GST C-terminal domain; that stretch reads DPQKRALINQ…KGLLQMKTMY (122 aa).

The protein belongs to the GST superfamily. Delta family. In terms of assembly, homodimer.

It carries out the reaction RX + glutathione = an S-substituted glutathione + a halide anion + H(+). In terms of biological role, conjugation of reduced glutathione to a wide number of exogenous and endogenous hydrophobic electrophiles. May be involved in detoxification. The protein is Glutathione S-transferase D4 of Drosophila melanogaster (Fruit fly).